A 419-amino-acid chain; its full sequence is Serine hydroxymethyltransferase (419 aa).

(6S)-5,6,7,8-tetrahydrofolate-binding positions include L121 and 125–127 (GHL). K231 carries the N6-(pyridoxal phosphate)lysine modification.

The protein belongs to the SHMT family. In terms of assembly, homodimer. Requires pyridoxal 5'-phosphate as cofactor.

It is found in the cytoplasm. It catalyses the reaction (6R)-5,10-methylene-5,6,7,8-tetrahydrofolate + glycine + H2O = (6S)-5,6,7,8-tetrahydrofolate + L-serine. It participates in one-carbon metabolism; tetrahydrofolate interconversion. The protein operates within amino-acid biosynthesis; glycine biosynthesis; glycine from L-serine: step 1/1. Catalyzes the reversible interconversion of serine and glycine with tetrahydrofolate (THF) serving as the one-carbon carrier. This reaction serves as the major source of one-carbon groups required for the biosynthesis of purines, thymidylate, methionine, and other important biomolecules. Also exhibits THF-independent aldolase activity toward beta-hydroxyamino acids, producing glycine and aldehydes, via a retro-aldol mechanism. This Phytoplasma mali (strain AT) protein is Serine hydroxymethyltransferase.